The following is a 406-amino-acid chain: Multidrug resistance protein MdtG (406 aa).

A run of 11 helical transmembrane segments spans residues 16-36 (VAWL…PFLP), 56-76 (LVFS…GGLA), 90-110 (LGMA…QFLL), 113-133 (ALLG…ATQV), 144-164 (TLST…GLLA), 171-191 (PVFF…LFFT), 222-242 (LFVT…ILTL), 254-274 (IAFI…LSAP), 288-308 (ILIT…FVQT), 317-337 (FLLG…LVYN), and 376-396 (AVFC…WNSL).

It belongs to the major facilitator superfamily. DHA1 family. MdtG (TC 2.A.1.2.20) subfamily.

The protein resides in the cell inner membrane. The polypeptide is Multidrug resistance protein MdtG (Citrobacter koseri (strain ATCC BAA-895 / CDC 4225-83 / SGSC4696)).